We begin with the raw amino-acid sequence, 420 residues long: Calsequestrin-1 (420 aa).

An N-terminal signal peptide occupies residues 1 to 22 (MKGPWLVLAALCLSLANLGPRG). N-linked (GlcNAc...) asparagine glycosylation occurs at asparagine 338. The segment at 369–420 (LEGEVNTEDDDDDDDDDDDDDDDDDDDDDDDDDDDDDDDDDDDDDDDDDDDD) is disordered.

Belongs to the calsequestrin family. In terms of assembly, monomer; increases in response to a depletion of intracellular calcium. Homodimer. Homotetramer and homopolymer. Can form linear homooligomers. Ca(2+) ions promote oligomerization. In terms of tissue distribution, detected in skeletal muscle (at protein level). Detected in skeletal muscle.

The protein localises to the endoplasmic reticulum. It is found in the sarcoplasmic reticulum. It localises to the sarcoplasmic reticulum lumen. The protein resides in the sarcoplasmic reticulum membrane. Its subcellular location is the mitochondrion matrix. In terms of biological role, calsequestrin is a high-capacity, moderate affinity, calcium-binding protein and thus acts as an internal calcium store in muscle. Calcium ions are bound by clusters of acidic residues at the protein surface, often at the interface between subunits. Can bind around 80 Ca(2+) ions. Regulates the release of lumenal Ca(2+) via the calcium release channel RYR1; this plays an important role in triggering muscle contraction. Negatively regulates store-operated Ca(2+) entry (SOCE) activity. The protein is Calsequestrin-1 of Pelophylax lessonae (Pool frog).